The primary structure comprises 553 residues: Threonylcarbamoyladenosine tRNA methylthiotransferase (553 aa).

The disordered stretch occupies residues Ser21–Pro61. Composition is skewed to basic and acidic residues over residues Glu23–Gln32 and Ile47–Thr58. The 108-residue stretch at Gln72–Lys179 folds into the MTTase N-terminal domain. Residues Cys81, Cys116, Cys145, Cys221, Cys225, and Cys228 each contribute to the [4Fe-4S] cluster site. One can recognise a Radical SAM core domain in the interval Arg207–Ala438. A TRAM domain is found at Ala438–Asp500. Residues Val533–Leu553 traverse the membrane as a helical segment.

This sequence belongs to the methylthiotransferase family. CDKAL1 subfamily. The cofactor is [4Fe-4S] cluster.

It localises to the membrane. It catalyses the reaction N(6)-L-threonylcarbamoyladenosine(37) in tRNA + (sulfur carrier)-SH + AH2 + 2 S-adenosyl-L-methionine = 2-methylsulfanyl-N(6)-L-threonylcarbamoyladenosine(37) in tRNA + (sulfur carrier)-H + 5'-deoxyadenosine + L-methionine + A + S-adenosyl-L-homocysteine + 2 H(+). Functionally, catalyzes the methylthiolation of N6-threonylcarbamoyladenosine (t(6)A), leading to the formation of 2-methylthio-N6-threonylcarbamoyladenosine (ms(2)t(6)A) at position 37 in tRNAs that read codons beginning with adenine. The sequence is that of Threonylcarbamoyladenosine tRNA methylthiotransferase from Drosophila pseudoobscura pseudoobscura (Fruit fly).